The following is a 169-amino-acid chain: uncharacterized protein (169 aa).

The protein resides in the mitochondrion. This is an uncharacterized protein from Paramecium tetraurelia.